Consider the following 274-residue polypeptide: Nitrogenase iron protein (274 aa).

Residue 8-15 (GKGGIGKS) coordinates ATP. Cys94 serves as a coordination point for [4Fe-4S] cluster. At Arg97 the chain carries ADP-ribosylarginine; by dinitrogenase reductase ADP-ribosyltransferase. Residue Cys131 coordinates [4Fe-4S] cluster.

This sequence belongs to the NifH/BchL/ChlL family. In terms of assembly, homodimer. [4Fe-4S] cluster is required as a cofactor. In terms of processing, the reversible ADP-ribosylation of Arg-97 inactivates the nitrogenase reductase and regulates nitrogenase activity.

The catalysed reaction is N2 + 8 reduced [2Fe-2S]-[ferredoxin] + 16 ATP + 16 H2O = H2 + 8 oxidized [2Fe-2S]-[ferredoxin] + 2 NH4(+) + 16 ADP + 16 phosphate + 6 H(+). Its function is as follows. The key enzymatic reactions in nitrogen fixation are catalyzed by the nitrogenase complex, which has 2 components: the iron protein and the molybdenum-iron protein. The sequence is that of Nitrogenase iron protein from Chlorobium phaeobacteroides (strain DSM 266 / SMG 266 / 2430).